The chain runs to 106 residues: Large ribosomal subunit protein bL21 (106 aa).

It belongs to the bacterial ribosomal protein bL21 family. Part of the 50S ribosomal subunit. Contacts protein L20.

In terms of biological role, this protein binds to 23S rRNA in the presence of protein L20. This chain is Large ribosomal subunit protein bL21, found in Xanthomonas euvesicatoria pv. vesicatoria (strain 85-10) (Xanthomonas campestris pv. vesicatoria).